Consider the following 261-residue polypeptide: Undecaprenyl-diphosphatase (261 aa).

Transmembrane regions (helical) follow at residues asparagine 39–phenylalanine 59, leucine 76–phenylalanine 96, leucine 99–leucine 119, alanine 173–leucine 193, isoleucine 206–valine 226, and leucine 238–alanine 258.

Belongs to the UppP family.

The protein localises to the cell membrane. It carries out the reaction di-trans,octa-cis-undecaprenyl diphosphate + H2O = di-trans,octa-cis-undecaprenyl phosphate + phosphate + H(+). In terms of biological role, catalyzes the dephosphorylation of undecaprenyl diphosphate (UPP). Confers resistance to bacitracin. The polypeptide is Undecaprenyl-diphosphatase (Carboxydothermus hydrogenoformans (strain ATCC BAA-161 / DSM 6008 / Z-2901)).